A 194-amino-acid chain; its full sequence is Cytochrome c biogenesis ATP-binding export protein CcmA (194 aa).

The region spanning 5–194 is the ABC transporter domain; it reads LALDGVACIR…LDELVMGVLA (190 aa). Position 37–44 (37–44) interacts with ATP; sequence GPNGAGKS.

The protein belongs to the ABC transporter superfamily. CcmA exporter (TC 3.A.1.107) family. The complex is composed of two ATP-binding proteins (CcmA) and two transmembrane proteins (CcmB).

The protein resides in the cell inner membrane. The enzyme catalyses heme b(in) + ATP + H2O = heme b(out) + ADP + phosphate + H(+). Functionally, part of the ABC transporter complex CcmAB involved in the biogenesis of c-type cytochromes; once thought to export heme, this seems not to be the case, but its exact role is uncertain. Responsible for energy coupling to the transport system. The protein is Cytochrome c biogenesis ATP-binding export protein CcmA of Sphingopyxis alaskensis (strain DSM 13593 / LMG 18877 / RB2256) (Sphingomonas alaskensis).